The sequence spans 682 residues: Tail-specific protease (682 aa).

An N-terminal signal peptide occupies residues 1–22 (MNMFFRLTALAGLLAIAGQTFA). One can recognise a PDZ domain in the interval 238 to 322 (NTEMSLSLEG…SKVRLEILPA (85 aa)). Residues serine 452, aspartate 463, and lysine 477 each act as charge relay system in the active site. Residues 635 to 650 (GKPELKKLDDLPKDYQ) show a composition bias toward basic and acidic residues. Positions 635–654 (GKPELKKLDDLPKDYQEPDP) are disordered.

The protein belongs to the peptidase S41A family.

The protein resides in the cell inner membrane. The enzyme catalyses The enzyme shows specific recognition of a C-terminal tripeptide, Xaa-Yaa-Zaa, in which Xaa is preferably Ala or Leu, Yaa is preferably Ala or Tyr, and Zaa is preferably Ala, but then cleaves at a variable distance from the C-terminus. A typical cleavage is -Ala-Ala-|-Arg-Ala-Ala-Lys-Glu-Asn-Tyr-Ala-Leu-Ala-Ala.. Involved in the cleavage of a C-terminal peptide of 11 residues from the precursor form of penicillin-binding protein 3 (PBP3). May be involved in protection of the bacterium from thermal and osmotic stresses. In Escherichia coli (strain K12), this protein is Tail-specific protease (prc).